The chain runs to 332 residues: Tryptophan--tRNA ligase (332 aa).

ATP-binding positions include 11–13 (QPS) and 19–20 (GN). The 'HIGH' region motif lies at 12 to 20 (PSGELTIGN). D135 is a binding site for L-tryptophan. Residues 147-149 (GQD), V186, and 195-199 (KMSKS) contribute to the ATP site. Positions 195-199 (KMSKS) match the 'KMSKS' region motif.

This sequence belongs to the class-I aminoacyl-tRNA synthetase family. In terms of assembly, homodimer.

It localises to the cytoplasm. The enzyme catalyses tRNA(Trp) + L-tryptophan + ATP = L-tryptophyl-tRNA(Trp) + AMP + diphosphate + H(+). Catalyzes the attachment of tryptophan to tRNA(Trp). The polypeptide is Tryptophan--tRNA ligase (Shewanella oneidensis (strain ATCC 700550 / JCM 31522 / CIP 106686 / LMG 19005 / NCIMB 14063 / MR-1)).